Consider the following 484-residue polypeptide: Cysteine--tRNA ligase (484 aa).

Cys29 contributes to the Zn(2+) binding site. The short motif at 31–41 is the 'HIGH' region element; it reads ITVYDYCHLGH. Residues Cys215, His240, and Glu244 each contribute to the Zn(2+) site. Residues 272–276 carry the 'KMSKS' region motif; that stretch reads KMSKS. Lys275 lines the ATP pocket.

Belongs to the class-I aminoacyl-tRNA synthetase family. In terms of assembly, monomer. Zn(2+) serves as cofactor.

The protein localises to the cytoplasm. The enzyme catalyses tRNA(Cys) + L-cysteine + ATP = L-cysteinyl-tRNA(Cys) + AMP + diphosphate. The protein is Cysteine--tRNA ligase of Rippkaea orientalis (strain PCC 8801 / RF-1) (Cyanothece sp. (strain PCC 8801)).